Reading from the N-terminus, the 630-residue chain is Mitochondrial Rho GTPase 1 (630 aa).

Residues Met1 to Tyr168 enclose the Miro 1 domain. Over Met1–Gln598 the chain is Cytoplasmic. Residues Gly10–Ser17, Asp57–Asp61, and Asn113–Glu116 contribute to the GTP site. EF-hand domains are found at residues Ala184–Lys219 and Lys304–Leu339. Residues Asp197, Asn199, Asp201, Glu208, Asp317, Asp319, Asp321, and Glu328 each contribute to the Ca(2+) site. Positions Arg419 to Tyr579 constitute a Miro 2 domain. GTP-binding positions include Gly428–Thr435, Glu459–Thr463, and Thr527–Asp530. Residues Leu599 to Trp619 form a helical; Anchor for type IV membrane protein membrane-spanning segment. The Mitochondrial intermembrane portion of the chain corresponds to Lys620–Lys630.

This sequence belongs to the mitochondrial Rho GTPase family.

The protein resides in the mitochondrion outer membrane. In terms of biological role, mitochondrial GTPase involved in mitochondrial trafficking. Probably involved in control of anterograde transport of mitochondria and their subcellular distribution. The polypeptide is Mitochondrial Rho GTPase 1 (gem1) (Schizosaccharomyces pombe (strain 972 / ATCC 24843) (Fission yeast)).